The following is a 791-amino-acid chain: MDTGLKFLVSGGLATSSVIRKVSAVSSLDSSLPSSSILSAIHGSWTSAISHDCSKIAKVAAIVGIGYLGVRIGAAWCRRTPGITNSIITYGEEVVEQVKVDIDEDAEEESDIGEEIVVGTIGIGIHTNVNPEVRAKRRHRSRPFIKKIVNLTKNHFGGCPDSSKSNVMAVSKFVYEQCKQHNCLPHQTRLIMSIAVPLVLSPDMYDISSKALLNSEILTENRATLDRLKTLDGWLTHLVCHPLSAKAWRRAIDNLCGLPDWKAFKLVNXGCLEELAGFCTSVRRGTHPDMTEFPQDRPIKTRKLYCLGGVGTSVKFNVHNNSLANLRRGLVERVFFVENDKKELEPAPKPLSGAFDRLTWFRRKLHSIVGTHSSISPGQFLDFYTGRRRTIYEGAVKSLEGLSVQRRDAYLKTFVKAEKINTTKKPDPAPRVIQPRNVRYNVEVGRYLRRFEHYLYRGIDEIWNGPTIIKGYTVEQIGKIARDAWDSFVSPVAIGFDMKRFDQHVSSDALKWEHSVYLDAFCHDSYLAELLKWQLVNKGVGYASDGMIKYKVDGCRMSGDMNTAMGNCLIACAITHDFFRSRGIRARLMNNGDDCVVICEKECAAVVKADMVRHWRQFGFQCELECDAEIFEQIEFCQMRPVYDGEKYVMVRNPLVSLSKDSYSVGPWNGINHARKWVNAVGLCGLSLTGGIPVVQSYYNMMIRNTQSVNSSGILRDVSFASGFRELARLGNRKSGAISEDARFSFYLAFGITPDLQRAMESDYDAHTIEWGFVPQGNPRIQPISWTLNEL.

One can recognise a RdRp catalytic domain in the interval 491 to 607; sequence PVAIGFDMKR…ICEKECAAVV (117 aa).

It belongs to the tombusviridae RNA polymerase family.

The protein localises to the host mitochondrion. The catalysed reaction is RNA(n) + a ribonucleoside 5'-triphosphate = RNA(n+1) + diphosphate. Functionally, RNA-dependent RNA polymerase that plays an essential role in the virus replication. Induces the reorganization of host mitochondria and the formation of structures with numerous dilations surrounded by double membranes, which may provide a protected environment to viral replication. This Melon necrotic spot virus (MNSV) protein is RNA-directed RNA polymerase.